The primary structure comprises 518 residues: uncharacterized protein (518 aa).

Residues 1-21 (MWKWKVILLFLAEMFVSGVNG) form the signal peptide. Residues N30, N142, N295, N342, N362, N410, and N503 are each glycosylated (N-linked (GlcNAc...) asparagine). The CUB domain occupies 389-517 (CPPFGITNSV…RGFWVSITPQ (129 aa)).

It is found in the secreted. This is an uncharacterized protein from Caenorhabditis elegans.